The primary structure comprises 662 residues: Serine/threonine kinase-like domain-containing protein STKLD1 (662 aa).

Residues 1–202 enclose the Protein kinase domain; sequence MLNPGALGVN…ILDMATCSFL (202 aa). ATP-binding positions include 2–10 and Lys25; that span reads LNPGALGVN. The segment at 639–662 is disordered; that stretch reads LQEDQLEPPAGQEAPLQGEPLFRP.

This sequence belongs to the protein kinase superfamily. Ser/Thr protein kinase family. STKL subfamily.

The protein is Serine/threonine kinase-like domain-containing protein STKLD1 (Stkld1) of Mus musculus (Mouse).